Here is a 348-residue protein sequence, read N- to C-terminus: Rhodopsin (348 aa).

Residues 1-33 (TEGPFFYIPMVNTSGVVRSPYEYPQYYLVNPAA) are Extracellular-facing. N12 carries N-linked (GlcNAc...) asparagine glycosylation. A helical transmembrane segment spans residues 34-58 (YAILGAYMFFLIIIGFPVNFMTLYV). Residues 59–70 (TLEHKKLRTPLN) are Cytoplasmic-facing. The chain crosses the membrane as a helical span at residues 71–93 (YILLNLAVADLFMVIGGFTTTMY). Residues 94 to 107 (SSMHGYFVLGRLGC) lie on the Extracellular side of the membrane. A disulfide bridge connects residues C107 and C184. A helical transmembrane segment spans residues 108–130 (NMEGFSATLGGMISLWSLAVLAI). Positions 131-133 (ERW) match the 'Ionic lock' involved in activated form stabilization motif. At 131–149 (ERWVVVCKPISNFRFGENH) the chain is on the cytoplasmic side. The helical transmembrane segment at 150–170 (AIMGVSLTWFMALACTVPPLV) threads the bilayer. Residues 171-199 (GWSRYIPEGMQCSCGIDYYTRAEGFNNES) are Extracellular-facing. N197 is a glycosylation site (N-linked (GlcNAc...) asparagine). Residues 200–221 (FVLYMFFCHFLVPLVIIFFCYG) traverse the membrane as a helical segment. Residues 222 to 249 (RLLCAVKEAAAAQQESETTQRAEREVTR) lie on the Cytoplasmic side of the membrane. Residues 250 to 271 (MVIIMVIGFLVCWLPYASVAWF) traverse the membrane as a helical segment. The Extracellular portion of the chain corresponds to 272–283 (IFTHQGSEFGPL). Residues 284 to 305 (FMTIPAFFAKSSSIYNPMIYIC) traverse the membrane as a helical segment. An N6-(retinylidene)lysine modification is found at K293. Residues 306 to 348 (MNKQFRNCMITTLFCGKNPFEGEEEGASSTKTEASSASSVSPA) are Cytoplasmic-facing. A lipid anchor (S-palmitoyl cysteine) is attached at C320. The segment at 327–348 (GEEEGASSTKTEASSASSVSPA) is disordered. Residues 332-348 (ASSTKTEASSASSVSPA) show a composition bias toward low complexity.

This sequence belongs to the G-protein coupled receptor 1 family. Opsin subfamily. In terms of processing, phosphorylated on some or all of the serine and threonine residues present in the C-terminal region. Contains one covalently linked retinal chromophore.

Its subcellular location is the membrane. The protein localises to the cell projection. It localises to the cilium. The protein resides in the photoreceptor outer segment. Its function is as follows. Photoreceptor required for image-forming vision at low light intensity. While most salt water fish species use retinal as chromophore, most freshwater fish use 3-dehydroretinal, or a mixture of retinal and 3-dehydroretinal. Light-induced isomerization of 11-cis to all-trans retinal triggers a conformational change that activates signaling via G-proteins. Subsequent receptor phosphorylation mediates displacement of the bound G-protein alpha subunit by arrestin and terminates signaling. In Sargocentron punctatissimum (Speckled squirrelfish), this protein is Rhodopsin (rho).